Here is a 208-residue protein sequence, read N- to C-terminus: MPTVDVVDLNNQVVSSVELADDVFGAEVNQSLLYEAVRQYQASLRAGTHATKVRREVSGSGKKLWKQKGTGRARIGSVRSPLWRHGATVHGPQPRDYAYKLPKKMLLGALRSALSAKVRDGELKVVQNFNFSDHKTKNAMGALSKLEAGRTVLVVDNEDNRNLELGIRNLKGVTLLATREVNPYHLLGHKSVLISEAAARKFSEALAK.

It belongs to the universal ribosomal protein uL4 family. Part of the 50S ribosomal subunit.

Functionally, one of the primary rRNA binding proteins, this protein initially binds near the 5'-end of the 23S rRNA. It is important during the early stages of 50S assembly. It makes multiple contacts with different domains of the 23S rRNA in the assembled 50S subunit and ribosome. In terms of biological role, forms part of the polypeptide exit tunnel. The polypeptide is Large ribosomal subunit protein uL4 (Solibacter usitatus (strain Ellin6076)).